The chain runs to 491 residues: Chromosomal replication initiator protein DnaA (491 aa).

Residues 1–69 are domain I, interacts with DnaA modulators; the sequence is MTTWNKCLKK…TIQEFHDGDL (69 aa). A domain II region spans residues 69–154; that stretch reads LLIEYSNKKF…KDDQEYSFGL (86 aa). The interval 106 to 126 is disordered; that stretch reads DSEETSLNQEPKKSQKKLSSK. The tract at residues 155-371 is domain III, AAA+ region; the sequence is PLKEKYVFDS…GALNRVLTTS (217 aa). ATP contacts are provided by Gly-199, Gly-201, Lys-202, and Thr-203. The segment at 372 to 491 is domain IV, binds dsDNA; it reads KFNHKDPTIE…YELLLDKISR (120 aa).

It belongs to the DnaA family. As to quaternary structure, oligomerizes as a right-handed, spiral filament on DNA at oriC.

It is found in the cytoplasm. Plays an essential role in the initiation and regulation of chromosomal replication. ATP-DnaA binds to the origin of replication (oriC) to initiate formation of the DNA replication initiation complex once per cell cycle. Binds the DnaA box (a 9 base pair repeat at the origin) and separates the double-stranded (ds)DNA. Forms a right-handed helical filament on oriC DNA; dsDNA binds to the exterior of the filament while single-stranded (ss)DNA is stabiized in the filament's interior. The ATP-DnaA-oriC complex binds and stabilizes one strand of the AT-rich DNA unwinding element (DUE), permitting loading of DNA polymerase. After initiation quickly degrades to an ADP-DnaA complex that is not apt for DNA replication. Binds acidic phospholipids. The polypeptide is Chromosomal replication initiator protein DnaA (Francisella philomiragia subsp. philomiragia (strain ATCC 25017 / CCUG 19701 / FSC 153 / O#319-036)).